Reading from the N-terminus, the 280-residue chain is Band 7 protein AGAP004871 (280 aa).

A helical transmembrane segment spans residues 23-43 (ILIFLSWVLVVLTMPFSLLVC).

This sequence belongs to the band 7/mec-2 family.

It is found in the membrane. This chain is Band 7 protein AGAP004871, found in Anopheles gambiae (African malaria mosquito).